The chain runs to 211 residues: Succinate dehydrogenase subunit 4, mitochondrial (211 aa).

The N-terminal 36 residues, 1 to 36, are a transit peptide targeting the mitochondrion; it reads MASRLLARSKALALALSRADAAAPGPAAGVQWLRTL. Residues 41–64 are disordered; that stretch reads RDPAAAASPAPAPRQPAVGSPLGL. A heme-binding site is contributed by His-166. Tyr-179 lines the a ubiquinone pocket. A helical transmembrane segment spans residues 188–210; sequence WVFIYFKILLIIMAKETVVYFDL.

Component of complex II composed of eight subunits in plants: four classical SDH subunits SDH1, SDH2, SDH3 and SDH4 (a flavoprotein (FP), an iron-sulfur protein (IP), and a cytochrome b composed of a large and a small subunit.), as well as four subunits unknown in mitochondria from bacteria and heterotrophic eukaryotes. Heme is required as a cofactor.

The protein resides in the mitochondrion inner membrane. The protein operates within carbohydrate metabolism; tricarboxylic acid cycle. Its function is as follows. Membrane-anchoring subunit of succinate dehydrogenase (SDH). This Oryza sativa subsp. japonica (Rice) protein is Succinate dehydrogenase subunit 4, mitochondrial.